A 215-amino-acid chain; its full sequence is Protein FAM167A (215 aa).

2 disordered regions span residues 1–26 and 63–109; these read MSVP…PPDD and RPAA…LTTG. The stretch at 124–157 forms a coiled coil; sequence LRKELAEMRLQDQQLARQLMRLRGDINKLKIEQT.

It belongs to the FAM167 (SEC) family.

The sequence is that of Protein FAM167A (Fam167a) from Mus musculus (Mouse).